A 137-amino-acid polypeptide reads, in one-letter code: Large ribosomal subunit protein uL16 (137 aa).

This sequence belongs to the universal ribosomal protein uL16 family. In terms of assembly, part of the 50S ribosomal subunit.

In terms of biological role, binds 23S rRNA and is also seen to make contacts with the A and possibly P site tRNAs. The polypeptide is Large ribosomal subunit protein uL16 (Tolumonas auensis (strain DSM 9187 / NBRC 110442 / TA 4)).